A 273-amino-acid chain; its full sequence is 2,3,4,5-tetrahydropyridine-2,6-dicarboxylate N-succinyltransferase (273 aa).

Residues Arg-104 and Asp-141 each contribute to the substrate site.

The protein belongs to the transferase hexapeptide repeat family. In terms of assembly, homotrimer.

It is found in the cytoplasm. It carries out the reaction (S)-2,3,4,5-tetrahydrodipicolinate + succinyl-CoA + H2O = (S)-2-succinylamino-6-oxoheptanedioate + CoA. Its pathway is amino-acid biosynthesis; L-lysine biosynthesis via DAP pathway; LL-2,6-diaminopimelate from (S)-tetrahydrodipicolinate (succinylase route): step 1/3. The chain is 2,3,4,5-tetrahydropyridine-2,6-dicarboxylate N-succinyltransferase from Neisseria meningitidis serogroup C (strain 053442).